The sequence spans 407 residues: Peptidase T (407 aa).

Histidine 78 contacts Zn(2+). Aspartate 80 is a catalytic residue. Aspartate 139 provides a ligand contact to Zn(2+). The active-site Proton acceptor is the glutamate 173. Residues glutamate 174, aspartate 196, and histidine 378 each coordinate Zn(2+).

Belongs to the peptidase M20B family. Requires Zn(2+) as cofactor.

The protein resides in the cytoplasm. The catalysed reaction is Release of the N-terminal residue from a tripeptide.. Cleaves the N-terminal amino acid of tripeptides. This chain is Peptidase T, found in Shewanella pealeana (strain ATCC 700345 / ANG-SQ1).